A 452-amino-acid chain; its full sequence is Bifunctional protein GlmU (452 aa).

The interval 1–226 (MKNIHAIILA…KFEIAGVNDK (226 aa)) is pyrophosphorylase. Residues 9–12 (LAAG), K23, Q73, 78–79 (GT), 100–102 (YGD), G137, E151, N166, and N224 each bind UDP-N-acetyl-alpha-D-glucosamine. D102 lines the Mg(2+) pocket. N224 contacts Mg(2+). The segment at 227–247 (VQLAELERIFQINQATQFMQQ) is linker. The interval 248–452 (GLSLKDPNRF…LKNWQRPTKK (205 aa)) is N-acetyltransferase. UDP-N-acetyl-alpha-D-glucosamine is bound by residues R330 and K348. H360 (proton acceptor) is an active-site residue. Residues Y363 and N374 each contribute to the UDP-N-acetyl-alpha-D-glucosamine site. Residues A377, 383 to 384 (NY), S402, A420, and R437 contribute to the acetyl-CoA site.

It in the N-terminal section; belongs to the N-acetylglucosamine-1-phosphate uridyltransferase family. The protein in the C-terminal section; belongs to the transferase hexapeptide repeat family. As to quaternary structure, homotrimer. It depends on Mg(2+) as a cofactor.

It is found in the cytoplasm. It carries out the reaction alpha-D-glucosamine 1-phosphate + acetyl-CoA = N-acetyl-alpha-D-glucosamine 1-phosphate + CoA + H(+). The enzyme catalyses N-acetyl-alpha-D-glucosamine 1-phosphate + UTP + H(+) = UDP-N-acetyl-alpha-D-glucosamine + diphosphate. It participates in nucleotide-sugar biosynthesis; UDP-N-acetyl-alpha-D-glucosamine biosynthesis; N-acetyl-alpha-D-glucosamine 1-phosphate from alpha-D-glucosamine 6-phosphate (route II): step 2/2. The protein operates within nucleotide-sugar biosynthesis; UDP-N-acetyl-alpha-D-glucosamine biosynthesis; UDP-N-acetyl-alpha-D-glucosamine from N-acetyl-alpha-D-glucosamine 1-phosphate: step 1/1. Its pathway is bacterial outer membrane biogenesis; LPS lipid A biosynthesis. In terms of biological role, catalyzes the last two sequential reactions in the de novo biosynthetic pathway for UDP-N-acetylglucosamine (UDP-GlcNAc). The C-terminal domain catalyzes the transfer of acetyl group from acetyl coenzyme A to glucosamine-1-phosphate (GlcN-1-P) to produce N-acetylglucosamine-1-phosphate (GlcNAc-1-P), which is converted into UDP-GlcNAc by the transfer of uridine 5-monophosphate (from uridine 5-triphosphate), a reaction catalyzed by the N-terminal domain. The chain is Bifunctional protein GlmU from Ruthia magnifica subsp. Calyptogena magnifica.